Here is a 421-residue protein sequence, read N- to C-terminus: Gamma-glutamyl phosphate reductase (421 aa).

Belongs to the gamma-glutamyl phosphate reductase family.

The protein resides in the cytoplasm. The catalysed reaction is L-glutamate 5-semialdehyde + phosphate + NADP(+) = L-glutamyl 5-phosphate + NADPH + H(+). It functions in the pathway amino-acid biosynthesis; L-proline biosynthesis; L-glutamate 5-semialdehyde from L-glutamate: step 2/2. Functionally, catalyzes the NADPH-dependent reduction of L-glutamate 5-phosphate into L-glutamate 5-semialdehyde and phosphate. The product spontaneously undergoes cyclization to form 1-pyrroline-5-carboxylate. This is Gamma-glutamyl phosphate reductase from Brucella melitensis biotype 1 (strain ATCC 23456 / CCUG 17765 / NCTC 10094 / 16M).